We begin with the raw amino-acid sequence, 689 residues long: Glycine--tRNA ligase beta subunit (689 aa).

The protein belongs to the class-II aminoacyl-tRNA synthetase family. In terms of assembly, tetramer of two alpha and two beta subunits.

The protein resides in the cytoplasm. The enzyme catalyses tRNA(Gly) + glycine + ATP = glycyl-tRNA(Gly) + AMP + diphosphate. The sequence is that of Glycine--tRNA ligase beta subunit from Acinetobacter baylyi (strain ATCC 33305 / BD413 / ADP1).